The chain runs to 152 residues: Ribosome maturation factor RimP (152 aa).

Belongs to the RimP family.

The protein localises to the cytoplasm. Required for maturation of 30S ribosomal subunits. The polypeptide is Ribosome maturation factor RimP (Alkaliphilus metalliredigens (strain QYMF)).